Consider the following 204-residue polypeptide: Urease accessory protein UreG (204 aa).

Gly-11–Thr-18 contributes to the GTP binding site.

Belongs to the SIMIBI class G3E GTPase family. UreG subfamily. In terms of assembly, homodimer. UreD, UreF and UreG form a complex that acts as a GTP-hydrolysis-dependent molecular chaperone, activating the urease apoprotein by helping to assemble the nickel containing metallocenter of UreC. The UreE protein probably delivers the nickel.

The protein localises to the cytoplasm. Its function is as follows. Facilitates the functional incorporation of the urease nickel metallocenter. This process requires GTP hydrolysis, probably effectuated by UreG. The protein is Urease accessory protein UreG of Staphylococcus aureus (strain MSSA476).